A 147-amino-acid polypeptide reads, in one-letter code: Hemoglobin subunit beta (147 aa).

One can recognise a Globin domain in the interval 2-147; sequence ELTEAQRGAI…VVSALGKQYH (146 aa). 2 residues coordinate heme b: His63 and His92.

The protein belongs to the globin family. In terms of assembly, heterotetramer of two alpha chains and two beta chains. Red blood cells.

Its function is as follows. Involved in oxygen transport from gills to the various peripheral tissues. This Electrophorus electricus (Electric eel) protein is Hemoglobin subunit beta (hbb).